The primary structure comprises 201 residues: U1 small nuclear ribonucleoprotein C (201 aa).

Residues 4–36 form a Matrin-type zinc finger; sequence YYCEYCDIYLTHSSPVGRRQHNQGRKHISAKIE. The segment covering 137 to 154 has biased composition (low complexity); sequence IQKPYNNFDNKNNNYNNK. Positions 137–176 are disordered; sequence IQKPYNNFDNKNNNYNNKPITNSSYKNDKQDYRNNNENND.

Belongs to the U1 small nuclear ribonucleoprotein C family. As to quaternary structure, U1 snRNP is composed of the 7 core Sm proteins B/B', D1, D2, D3, E, F and G that assemble in a heptameric protein ring on the Sm site of the small nuclear RNA to form the core snRNP, and at least 3 U1 snRNP-specific proteins U1-70K, U1-A and U1-C. U1-C interacts with U1 snRNA and the 5' splice-site region of the pre-mRNA.

It is found in the nucleus. In terms of biological role, component of the spliceosomal U1 snRNP, which is essential for recognition of the pre-mRNA 5' splice-site and the subsequent assembly of the spliceosome. U1-C is directly involved in initial 5' splice-site recognition for both constitutive and regulated alternative splicing. The interaction with the 5' splice-site seems to precede base-pairing between the pre-mRNA and the U1 snRNA. Stimulates commitment or early (E) complex formation by stabilizing the base pairing of the 5' end of the U1 snRNA and the 5' splice-site region. This chain is U1 small nuclear ribonucleoprotein C, found in Plasmodium yoelii yoelii.